Reading from the N-terminus, the 318-residue chain is Ornithine carbamoyltransferase (318 aa).

Carbamoyl phosphate is bound by residues 63–66 (STRT), glutamine 90, arginine 114, and 141–144 (HPCQ). L-ornithine contacts are provided by residues asparagine 172, aspartate 235, and 239-240 (SM). Carbamoyl phosphate-binding positions include 275–276 (CL) and arginine 303.

The protein belongs to the aspartate/ornithine carbamoyltransferase superfamily. OTCase family.

Its subcellular location is the cytoplasm. The catalysed reaction is carbamoyl phosphate + L-ornithine = L-citrulline + phosphate + H(+). It functions in the pathway amino-acid biosynthesis; L-arginine biosynthesis; L-arginine from L-ornithine and carbamoyl phosphate: step 1/3. In terms of biological role, reversibly catalyzes the transfer of the carbamoyl group from carbamoyl phosphate (CP) to the N(epsilon) atom of ornithine (ORN) to produce L-citrulline. This chain is Ornithine carbamoyltransferase, found in Parasynechococcus marenigrum (strain WH8102).